Reading from the N-terminus, the 834-residue chain is U-box domain-containing protein 33 (834 aa).

Residues Phe232 to Asp308 are disordered. Polar residues-rich tracts occupy residues Ser243–Asn273 and Ser284–Met293. The stretch at Leu334–Leu462 forms a coiled coil. Residues Phe481–Arg744 form the Protein kinase domain. ATP contacts are provided by residues Ile487–Ile495 and Lys508. Asp603 serves as the catalytic Proton acceptor. Residues Ile762–Leu834 enclose the U-box domain.

Belongs to the protein kinase superfamily. Ser/Thr protein kinase family.

It catalyses the reaction L-seryl-[protein] + ATP = O-phospho-L-seryl-[protein] + ADP + H(+). It carries out the reaction L-threonyl-[protein] + ATP = O-phospho-L-threonyl-[protein] + ADP + H(+). The enzyme catalyses S-ubiquitinyl-[E2 ubiquitin-conjugating enzyme]-L-cysteine + [acceptor protein]-L-lysine = [E2 ubiquitin-conjugating enzyme]-L-cysteine + N(6)-ubiquitinyl-[acceptor protein]-L-lysine.. It functions in the pathway protein modification; protein ubiquitination. In terms of biological role, functions as an E3 ubiquitin ligase. This is U-box domain-containing protein 33 (PUB33) from Arabidopsis thaliana (Mouse-ear cress).